We begin with the raw amino-acid sequence, 274 residues long: Dermonecrotic toxin SdSicTox-betaIIB1bx (274 aa).

Histidine 5 is a catalytic residue. Residues glutamate 25 and aspartate 27 each contribute to the Mg(2+) site. The active-site Nucleophile is histidine 41. 2 disulfide bridges follow: cysteine 45/cysteine 51 and cysteine 47/cysteine 190. Aspartate 85 is a Mg(2+) binding site.

The protein belongs to the arthropod phospholipase D family. Class II subfamily. Mg(2+) serves as cofactor. As to expression, expressed by the venom gland.

It localises to the secreted. The catalysed reaction is an N-(acyl)-sphingosylphosphocholine = an N-(acyl)-sphingosyl-1,3-cyclic phosphate + choline. The enzyme catalyses an N-(acyl)-sphingosylphosphoethanolamine = an N-(acyl)-sphingosyl-1,3-cyclic phosphate + ethanolamine. It carries out the reaction a 1-acyl-sn-glycero-3-phosphocholine = a 1-acyl-sn-glycero-2,3-cyclic phosphate + choline. It catalyses the reaction a 1-acyl-sn-glycero-3-phosphoethanolamine = a 1-acyl-sn-glycero-2,3-cyclic phosphate + ethanolamine. In terms of biological role, dermonecrotic toxins cleave the phosphodiester linkage between the phosphate and headgroup of certain phospholipids (sphingolipid and lysolipid substrates), forming an alcohol (often choline) and a cyclic phosphate. This toxin acts on sphingomyelin (SM). It may also act on ceramide phosphoethanolamine (CPE), lysophosphatidylcholine (LPC) and lysophosphatidylethanolamine (LPE), but not on lysophosphatidylserine (LPS), and lysophosphatidylglycerol (LPG). It acts by transphosphatidylation, releasing exclusively cyclic phosphate products as second products. Induces dermonecrosis, hemolysis, increased vascular permeability, edema, inflammatory response, and platelet aggregation. This chain is Dermonecrotic toxin SdSicTox-betaIIB1bx, found in Sicarius cf. damarensis (strain GJB-2008) (Six-eyed sand spider).